Reading from the N-terminus, the 661-residue chain is Bifunctional xylanase/xylan deacetylase (661 aa).

Residues 1-27 (MKLPTLGKCVVRTLMGAVALGAISVNA) form the signal peptide. A GH11 domain is found at 29-226 (TLSSNSTGTN…SRGSSDITVS (198 aa)). Glu116 serves as the catalytic Nucleophile; for endoxylanase activity. Glu213 serves as the catalytic Proton donor; for endoxylanase activity. Residues 220-259 (SSDITVSEGTSGGGTSSVGGASSSVNSSTGGGSSGGITVR) are disordered. Over residues 237–247 (VGGASSSVNSS) the composition is skewed to low complexity. A polysaccharide deacetylase region spans residues 394 to 577 (SNCSGYVGIT…AKGLCPGRID (184 aa)). The 177-residue stretch at 398–574 (GYVGITFDDG…NLRAKGLCPG (177 aa)) folds into the NodB homology domain. The disordered stretch occupies residues 578-610 (PNTGRAVAPSSSGGSSSVALSSSSRSSSSAGGN). A compositionally biased stretch (low complexity) spans 581 to 608 (GRAVAPSSSGGSSSVALSSSSRSSSSAG). The CBM10 domain maps to 616–645 (QCNWWGTFYPLCQTQTSGWGWENSRSCIST).

This sequence in the N-terminal section; belongs to the glycosyl hydrolase 11 (cellulase G) family.

Its subcellular location is the secreted. It catalyses the reaction Endohydrolysis of (1-&gt;4)-beta-D-xylosidic linkages in xylans.. The catalysed reaction is Deacetylation of xylans and xylo-oligosaccharides.. It participates in glycan degradation; xylan degradation. Its function is as follows. Endo-acting xylanase which specifically cleaves internal linkages on the xylan backbone, releasing xylooligosaccharides. Is able to hydrolyze oat spelt xylan and the arabinoxylans from wheat and rye, releasing xylobiose as the major product. Also likely catalyzes, via its C-terminal domain, the removal of acetyl groups from acetylated xylan. Thus, has the capability of hydrolyzing acetylated xylan. Does not attack mannan, galactan, arabinan or any cellulosic substrates. This is Bifunctional xylanase/xylan deacetylase (xyn11A) from Cellvibrio japonicus (Pseudomonas fluorescens subsp. cellulosa).